We begin with the raw amino-acid sequence, 127 residues long: Small ribosomal subunit protein bS6 (127 aa).

The interval 102–127 (IMQGAEKGKSSRKEKVDAEAEASEEA) is disordered. The span at 107-119 (EKGKSSRKEKVDA) shows a compositional bias: basic and acidic residues.

It belongs to the bacterial ribosomal protein bS6 family.

In terms of biological role, binds together with bS18 to 16S ribosomal RNA. This chain is Small ribosomal subunit protein bS6, found in Coxiella burnetii (strain CbuK_Q154) (Coxiella burnetii (strain Q154)).